The primary structure comprises 712 residues: Polyribonucleotide nucleotidyltransferase (712 aa).

2 residues coordinate Mg(2+): Asp487 and Asp493. In terms of domain architecture, KH spans 554–613 (PKIITMTINPDKIRDVIGPSGKQINKIIEETGVKIDIEQDGTVFISSINQEMNDKAKKII). The region spanning 623 to 691 (GEIYEGKVKR…KQGRVNLSRK (69 aa)) is the S1 motif domain.

Belongs to the polyribonucleotide nucleotidyltransferase family. Mg(2+) serves as cofactor.

It is found in the cytoplasm. It catalyses the reaction RNA(n+1) + phosphate = RNA(n) + a ribonucleoside 5'-diphosphate. In terms of biological role, involved in mRNA degradation. Catalyzes the phosphorolysis of single-stranded polyribonucleotides processively in the 3'- to 5'-direction. This Bacillus cereus (strain ATCC 10987 / NRS 248) protein is Polyribonucleotide nucleotidyltransferase.